The sequence spans 96 residues: MVVKIRLARHGVRNRPFYHIVVANAWKAPQAKPIETIGTFDPIPKKIDSQDSIPRIKDIQLNVERFKYWISVGAQPSDTVRSLAEKFQLLPKKPVS.

This sequence belongs to the bacterial ribosomal protein bS16 family. As to quaternary structure, component of the mitochondrial small ribosomal subunit (mt-SSU). Mature yeast 74S mitochondrial ribosomes consist of a small (37S) and a large (54S) subunit. The 37S small subunit contains a 15S ribosomal RNA (15S mt-rRNA) and at least 32 different proteins. The 54S large subunit contains a 21S rRNA (21S mt-rRNA) and at least 45 different proteins.

It is found in the mitochondrion. Component of the mitochondrial ribosome (mitoribosome), a dedicated translation machinery responsible for the synthesis of mitochondrial genome-encoded proteins, including at least some of the essential transmembrane subunits of the mitochondrial respiratory chain. The mitoribosomes are attached to the mitochondrial inner membrane and translation products are cotranslationally integrated into the membrane. This is Small ribosomal subunit protein bS16m (mrps16) from Schizosaccharomyces pombe (strain 972 / ATCC 24843) (Fission yeast).